Here is a 722-residue protein sequence, read N- to C-terminus: Polyribonucleotide nucleotidyltransferase (722 aa).

The Mg(2+) site is built by D495 and D501. The region spanning 562 to 621 (PRLLSFRIDPELIGTVIGPGGRTIKGITERTNTKIDIEDGGIVTIASHDGVAAEEAQKII) is the KH domain. Positions 631–699 (GEIFTGSITR…NRGRINLTLR (69 aa)) constitute an S1 motif domain. The segment covering 701 to 711 (VSQNNNDMNYP) has biased composition (polar residues). The tract at residues 701–722 (VSQNNNDMNYPQPTPTPVAPLN) is disordered. Residues 712–722 (QPTPTPVAPLN) are compositionally biased toward pro residues.

Belongs to the polyribonucleotide nucleotidyltransferase family. The cofactor is Mg(2+).

The protein resides in the cytoplasm. The catalysed reaction is RNA(n+1) + phosphate = RNA(n) + a ribonucleoside 5'-diphosphate. Its function is as follows. Involved in mRNA degradation. Catalyzes the phosphorolysis of single-stranded polyribonucleotides processively in the 3'- to 5'-direction. The polypeptide is Polyribonucleotide nucleotidyltransferase (Prochlorococcus marinus (strain MIT 9211)).